The chain runs to 277 residues: uncharacterized protein (277 aa).

Positions 232–262 (NNESAICESQASSKEDERSDKTTSSSKKKSF) are disordered. A compositionally biased stretch (polar residues) spans 234-243 (ESAICESQAS).

It localises to the cytoplasm. The protein resides in the nucleus. This is an uncharacterized protein from Schizosaccharomyces pombe (strain 972 / ATCC 24843) (Fission yeast).